Consider the following 527-residue polypeptide: Beta-glucosidase 19 (527 aa).

The first 21 residues, 1-21 (MKIPLLGLLLLISLVGSPTRA), serve as a signal peptide directing secretion. A beta-D-glucoside-binding residues include Gln-52 and His-155. A glycan (N-linked (GlcNAc...) asparagine) is linked at Asn-183. Position 200–201 (200–201 (NE)) interacts with a beta-D-glucoside. Catalysis depends on Glu-201, which acts as the Proton donor. A disulfide bond links Cys-220 and Cys-231. A beta-D-glucoside-binding residues include Tyr-345 and Glu-418. Glu-418 serves as the catalytic Nucleophile. Asn-462 carries N-linked (GlcNAc...) asparagine glycosylation. Residues Trp-469, 476 to 477 (EW), and Phe-485 contribute to the a beta-D-glucoside site. Asn-495 is a glycosylation site (N-linked (GlcNAc...) asparagine). Positions 524-527 (HEEL) match the Prevents secretion from ER motif.

Belongs to the glycosyl hydrolase 1 family.

It localises to the endoplasmic reticulum lumen. It carries out the reaction Hydrolysis of terminal, non-reducing beta-D-glucosyl residues with release of beta-D-glucose.. The sequence is that of Beta-glucosidase 19 from Arabidopsis thaliana (Mouse-ear cress).